Reading from the N-terminus, the 240-residue chain is MAPK-interacting and spindle-stabilizing protein-like (240 aa).

The interval 1 to 240 (MSDEFSLADA…PMPGGPHSYH (240 aa)) is disordered. At serine 2 the chain carries N-acetylserine. Phosphoserine is present on residues serine 2, serine 6, and serine 15. The segment covering 16–26 (PAKTSAVSNTK) has biased composition (polar residues). Residues 34-43 (WPGSNPWNNP) are compositionally biased toward low complexity. 4 stretches are compositionally biased toward pro residues: residues 44-66 (SAPP…PFGP), 74-122 (SVPP…PELP), 159-185 (PNMP…PPVP), and 193-202 (AWGPPAPYPA).

Belongs to the MISS family.

This chain is MAPK-interacting and spindle-stabilizing protein-like (MAPK1IP1L), found in Bos taurus (Bovine).